The following is a 563-amino-acid chain: Tripeptidyl-peptidase 1 (563 aa).

The signal sequence occupies residues 1–19 (MGLQACLLGLFALILSGKC). Positions 20 to 195 (SYSPEPDQRR…PEPQVTGTVG (176 aa)) are cleaved as a propeptide — removed in mature form. A disulfide bridge connects residues Cys111 and Cys122. The Peptidase S53 domain maps to 199–563 (GVTPSVIRKR…PALLKTLLNP (365 aa)). Asn210 and Asn222 each carry an N-linked (GlcNAc...) asparagine glycan. Active-site charge relay system residues include Glu272 and Asp276. Residues Asn286, Asn313, and Asn443 are each glycosylated (N-linked (GlcNAc...) asparagine). 2 disulfide bridges follow: Cys365/Cys526 and Cys522/Cys537. Ser475 (charge relay system) is an active-site residue. Asp517 and Val518 together coordinate Ca(2+). Gly539, Gly541, and Asp543 together coordinate Ca(2+).

Monomer. Interacts with CLN5. Interacts with CLN3. Requires Ca(2+) as cofactor. Post-translationally, activated by autocatalytic proteolytical processing upon acidification. N-glycosylation is required for processing and activity. Detected in all tissues examined with highest levels in heart and placenta and relatively similar levels in other tissues.

The protein resides in the lysosome. Its subcellular location is the melanosome. It carries out the reaction Release of an N-terminal tripeptide from a polypeptide, but also has endopeptidase activity.. With respect to regulation, inhibited by diisopropyl fluorophosphate (DFP). Its function is as follows. Lysosomal serine protease with tripeptidyl-peptidase I activity. May act as a non-specific lysosomal peptidase which generates tripeptides from the breakdown products produced by lysosomal proteinases. Requires substrates with an unsubstituted N-terminus. The sequence is that of Tripeptidyl-peptidase 1 (TPP1) from Homo sapiens (Human).